Reading from the N-terminus, the 231-residue chain is Insertion sequence IS1162 putative ATP-binding protein (231 aa).

Position 107–114 (107–114 (GPTGVGKT)) interacts with ATP.

The protein belongs to the IS21/IS1162 putative ATP-binding protein family.

In Pseudomonas fluorescens, this protein is Insertion sequence IS1162 putative ATP-binding protein.